Consider the following 359-residue polypeptide: Heme A synthase (359 aa).

5 helical membrane passes run 8-28 (IMSI…VVGG), 94-114 (LLGR…YYLK), 124-144 (LLLI…MVKS), 159-179 (GHLL…LIII), and 215-235 (IIIF…GLDA). Histidine 274 contributes to the heme binding site. A run of 3 helical transmembrane segments spans residues 276-296 (WFGI…IILN), 303-323 (MGMV…ITLV), and 328-348 (ILAA…FLFI). Histidine 334 is a heme binding site.

It belongs to the COX15/CtaA family. Type 2 subfamily. Interacts with CtaB. Requires heme b as cofactor.

The protein resides in the cell membrane. It carries out the reaction Fe(II)-heme o + 2 A + H2O = Fe(II)-heme a + 2 AH2. Its pathway is porphyrin-containing compound metabolism; heme A biosynthesis; heme A from heme O: step 1/1. In terms of biological role, catalyzes the conversion of heme O to heme A by two successive hydroxylations of the methyl group at C8. The first hydroxylation forms heme I, the second hydroxylation results in an unstable dihydroxymethyl group, which spontaneously dehydrates, resulting in the formyl group of heme A. The protein is Heme A synthase of Orientia tsutsugamushi (strain Ikeda) (Rickettsia tsutsugamushi).